A 314-amino-acid chain; its full sequence is Methionyl-tRNA formyltransferase (314 aa).

113–116 (SLLP) is a binding site for (6S)-5,6,7,8-tetrahydrofolate.

Belongs to the Fmt family.

It catalyses the reaction L-methionyl-tRNA(fMet) + (6R)-10-formyltetrahydrofolate = N-formyl-L-methionyl-tRNA(fMet) + (6S)-5,6,7,8-tetrahydrofolate + H(+). Attaches a formyl group to the free amino group of methionyl-tRNA(fMet). The formyl group appears to play a dual role in the initiator identity of N-formylmethionyl-tRNA by promoting its recognition by IF2 and preventing the misappropriation of this tRNA by the elongation apparatus. This Ectopseudomonas mendocina (strain ymp) (Pseudomonas mendocina) protein is Methionyl-tRNA formyltransferase.